The sequence spans 164 residues: Cyclin-dependent kinase inhibitor 1 (164 aa).

At S2 the chain carries N-acetylserine. Residue S2 forms a Glycyl serine ester (Ser-Gly) (interchain with G-Cter in ubiquitin) linkage. Residues 13–41 form a C4-type zinc finger; it reads CGSKACRRLFGPVDSEQLSRDCDALMAGC. Residues 17–24 form a required for binding cyclins region; sequence ACRRLFGP. A required for binding CDKs region spans residues 53–58; the sequence is FVTETP. The segment at 76–164 is disordered; sequence LYLPTGPRRG…RRLIFSKRKP (89 aa). Phosphothreonine; by LKB1 is present on T80. S114 carries the post-translational modification Phosphoserine; by GSK3-beta. S130 bears the Phosphoserine mark. Residues 140–164 carry the PIP-box K+4 motif motif; sequence RKRRQTSMTDFYHSKRRLIFSKRKP. The Nuclear localization signal motif lies at 141 to 156; sequence KRRQTSMTDFYHSKRR. A Phosphothreonine; by PKA, PKB/AKT1, PIM1 and PIM2 modification is found at T145. Phosphoserine; by PKC and NUAK1 is present on S146. Positions 152–164 are interaction with TRIM39; the sequence is HSKRRLIFSKRKP. Residues 153-164 are compositionally biased toward basic residues; it reads SKRRLIFSKRKP. Position 160 is a phosphoserine; by PKC; in vitro (S160).

The protein belongs to the CDI family. Interacts with HDAC1; the interaction is prevented by competitive binding of C10orf90/FATS to HDAC1 facilitating acetylation and protein stabilization of CDKN1A/p21. Interacts with MKRN1. Interacts with PSMA3. Interacts with PCNA. Component of the ternary complex, cyclin D-CDK4-CDKN1A. Interacts (via its N-terminal domain) with CDK4; the interaction promotes the assembly of the cyclin D-CDK4 complex, its nuclear translocation and promotes the cyclin D-dependent enzyme activity of CDK4. Binding to CDK2 leads to CDK2/cyclin E inactivation at the G1-S phase DNA damage checkpoint, thereby arresting cells at the G1-S transition during DNA repair. Interacts with PIM1. Interacts with STK11 and NUAK1. Interacts wih DTL. Interacts with isoform 1 and isoform 2 of TRIM39. Interacts with PKP3; the interaction sequesters CDKN1A to the cytoplasm thereby repressing its role as an inhibitor of CDK4- and CDK6-driven RB1 phosphorylation. Phosphorylation of Thr-145 by Akt or of Ser-146 by PKC impairs binding to PCNA. Phosphorylation at Ser-114 by GSK3-beta enhances ubiquitination by the DCX(DTL) complex. Phosphorylation of Thr-145 by PIM2 enhances CDKN1A stability and inhibits cell proliferation. Phosphorylation of Thr-145 by PIM1 results in the relocation of CDKN1A to the cytoplasm and enhanced CDKN1A protein stability. UV radiation-induced phosphorylation at Thr-80 by LKB1 and at Ser-146 by NUAK1 leads to its degradation. In terms of processing, ubiquitinated by MKRN1; leading to polyubiquitination and 26S proteasome-dependent degradation. Ubiquitinated by the DCX(DTL) complex, also named CRL4(CDT2) complex, leading to its degradation during S phase or following UV irradiation. Ubiquitination by the DCX(DTL) complex is essential to control replication licensing and is PCNA-dependent: interacts with PCNA via its PIP-box, while the presence of the containing the 'K+4' motif in the PIP box, recruit the DCX(DTL) complex, leading to its degradation. Ubiquitination at Ser-2 leads to degradation by the proteasome pathway. Ubiquitinated by RNF114; leading to proteasomal degradation. Post-translationally, acetylation leads to protein stability. Acetylated in vitro on Lys-141, Lys-154, Lys-161 and Lys-163. Deacetylation by HDAC1 is prevented by competitive binding of C10orf90/FATS to HDAC1. Expressed in all adult tissues, with 5-fold lower levels observed in the brain.

Its subcellular location is the cytoplasm. It is found in the nucleus. Plays an important role in controlling cell cycle progression and DNA damage-induced G2 arrest. Involved in p53/TP53 mediated inhibition of cellular proliferation in response to DNA damage. Also involved in p53-independent DNA damage-induced G2 arrest mediated by CREB3L1 in astrocytes and osteoblasts. Binds to and inhibits cyclin-dependent kinase activity, preventing phosphorylation of critical cyclin-dependent kinase substrates and blocking cell cycle progression. Functions in the nuclear localization and assembly of cyclin D-CDK4 complex and promotes its kinase activity towards RB1. At higher stoichiometric ratios, inhibits the kinase activity of the cyclin D-CDK4 complex. Inhibits DNA synthesis by DNA polymerase delta by competing with POLD3 for PCNA binding. Negatively regulates the CDK4- and CDK6-driven phosphorylation of RB1 in keratinocytes, thereby resulting in the release of E2F1 and subsequent transcription of E2F1-driven G1/S phase promoting genes. In Homo sapiens (Human), this protein is Cyclin-dependent kinase inhibitor 1.